Here is a 1240-residue protein sequence, read N- to C-terminus: Serine/threonine-protein kinase TAO2 (1240 aa).

At serine 9 the chain carries Phosphoserine. The Protein kinase domain maps to 28–281 (FSDLREIGHG…SEVLLKHRFV (254 aa)). ATP contacts are provided by residues 34–42 (IGHGSFGAV) and lysine 57. The active-site Proton acceptor is the aspartate 151. At serine 181 the chain carries Phosphoserine. Positions 320–463 (APNGPGAEAP…PTSTSSSARR (144 aa)) are disordered. Low complexity predominate over residues 356 to 380 (SSHSVPSMSISASSQSSSVNSLADA). Over residues 381–401 (SDNEEEEEEEEEEEEEEEEEG) the composition is skewed to acidic residues. Residues 402–417 (PESREMAMMQEGEHTV) are compositionally biased toward basic and acidic residues. The residue at position 422 (serine 422) is a Phosphoserine. Coiled-coil stretches lie at residues 493–528 (SALR…EEHS) and 581–608 (KELA…LQEN). Residue serine 663 is modified to Phosphoserine. Residues 688-720 (LRQHEATRELELRQLQAVQRTRAELTRLQHQTE) are a coiled coil. Residues serine 782, serine 830, and serine 832 each carry the phosphoserine modification. The stretch at 805 to 934 (RILGKEGTTL…GDGCPSPDIP (130 aa)) forms a coiled coil. The tract at residues 899-946 (VLTPVPEEEEEEEEEGGAPIGTHRDPGDGCPSPDIPPEPPPSHLRQYP) is disordered. Over residues 904 to 914 (PEEEEEEEEEG) the composition is skewed to acidic residues. A compositionally biased stretch (pro residues) spans 931–940 (PDIPPEPPPS). A run of 5 helical transmembrane segments spans residues 972-992 (LLPL…GGGL), 994-1014 (AALL…LFLC), 1019-1039 (LPPG…VLSL), 1045-1065 (LMGV…SLAL), and 1175-1195 (LASC…LLKG). Leucine 999 bears the Omega-N-methylarginine mark. Phosphoserine is present on leucine 1037. The disordered stretch occupies residues 1212 to 1240 (LGLSASRQLPPGTVAGRRSQTRRTLPPWR).

It belongs to the protein kinase superfamily. STE Ser/Thr protein kinase family. STE20 subfamily. As to quaternary structure, interacts with MAP2K3 and MAP2K6. Self-associates. Interacts with tubulins. Interacts with MAP3K7 and interferes with MAP3K7-binding to CHUK and thus prevents NF-kappa-B activation. Isoform 2 interacts with PCDH8; this complex may also include CDH2. The cofactor is Mg(2+). In terms of processing, autophosphorylated. Phosphorylated by ATM. Post-translationally, phosphorylated on Ser-1037 by MAPK14. This phosphorylation is required PCDH8 for endocytosis.

Its subcellular location is the cytoplasmic vesicle membrane. It localises to the cytoplasm. The protein resides in the cytoskeleton. The protein localises to the cell projection. It is found in the dendrite. The catalysed reaction is L-seryl-[protein] + ATP = O-phospho-L-seryl-[protein] + ADP + H(+). It carries out the reaction L-threonyl-[protein] + ATP = O-phospho-L-threonyl-[protein] + ADP + H(+). Its function is as follows. Serine/threonine-protein kinase involved in different processes such as membrane blebbing and apoptotic bodies formation DNA damage response and MAPK14/p38 MAPK stress-activated MAPK cascade. Phosphorylates itself, MBP, activated MAPK8, MAP2K3, MAP2K6 and tubulins. Activates the MAPK14/p38 MAPK signaling pathway through the specific activation and phosphorylation of the upstream MAP2K3 and MAP2K6 kinases. In response to DNA damage, involved in the G2/M transition DNA damage checkpoint by activating the p38/MAPK14 stress-activated MAPK cascade, probably by mediating phosphorylation of upstream MAP2K3 and MAP2K6 kinases. May affect microtubule organization and stability. May play a role in the osmotic stress-MAPK8 pathway. Prevents MAP3K7-mediated activation of CHUK, and thus NF-kappa-B activation. Isoform 2, but not isoform 1, is required for PCDH8 endocytosis. Following homophilic interactions between PCDH8 extracellular domains, isoform 2 phosphorylates and activates MAPK14/p38 MAPK which in turn phosphorylates isoform 2. This process leads to PCDH8 endocytosis and CDH2 cointernalization. Both isoforms are involved in MAPK14/p38 MAPK activation. In Mus musculus (Mouse), this protein is Serine/threonine-protein kinase TAO2 (Taok2).